The following is a 563-amino-acid chain: Membrane protein insertase YidC (563 aa).

The helical transmembrane segment at 1 to 21 threads the bilayer; sequence MDIKRTILIVALAIVTYVGVL. The disordered stretch occupies residues 43 to 62; the sequence is APGIPDTAAGTNGSASADVP. 5 helical membrane-spanning segments follow: residues 344–364, 370–390, 440–460, 471–491, and 518–538; these read LELT…FWLL, ILGN…GLFF, LGGC…YWVL, WILW…PIIM, and PIIF…YWVV.

Belongs to the OXA1/ALB3/YidC family. Type 1 subfamily. As to quaternary structure, interacts with the Sec translocase complex via SecD. Specifically interacts with transmembrane segments of nascent integral membrane proteins during membrane integration.

It localises to the cell inner membrane. In terms of biological role, required for the insertion and/or proper folding and/or complex formation of integral membrane proteins into the membrane. Involved in integration of membrane proteins that insert both dependently and independently of the Sec translocase complex, as well as at least some lipoproteins. Aids folding of multispanning membrane proteins. The sequence is that of Membrane protein insertase YidC from Pseudomonas savastanoi pv. phaseolicola (strain 1448A / Race 6) (Pseudomonas syringae pv. phaseolicola (strain 1448A / Race 6)).